The sequence spans 33 residues: Photosystem II reaction center protein Psb30 (33 aa).

A helical membrane pass occupies residues 5 to 25 (VIAQLTVLALIVASGPLVIAL).

Belongs to the Psb30/Ycf12 family. As to quaternary structure, PSII is composed of 1 copy each of membrane proteins PsbA, PsbB, PsbC, PsbD, PsbE, PsbF, PsbH, PsbI, PsbJ, PsbK, PsbL, PsbM, PsbT, PsbX, PsbY, PsbZ, Psb30/Ycf12, peripheral proteins of the oxygen-evolving complex and a large number of cofactors. It forms dimeric complexes.

The protein resides in the plastid. Its subcellular location is the chloroplast thylakoid membrane. In terms of biological role, a core subunit of photosystem II (PSII), probably helps stabilize the reaction center. In Marchantia polymorpha (Common liverwort), this protein is Photosystem II reaction center protein Psb30.